A 284-amino-acid polypeptide reads, in one-letter code: 4-diphosphocytidyl-2-C-methyl-D-erythritol kinase (284 aa).

K14 is an active-site residue. 98 to 108 (PMGGGLGGGSS) is an ATP binding site. Residue D140 is part of the active site.

Belongs to the GHMP kinase family. IspE subfamily.

The catalysed reaction is 4-CDP-2-C-methyl-D-erythritol + ATP = 4-CDP-2-C-methyl-D-erythritol 2-phosphate + ADP + H(+). It participates in isoprenoid biosynthesis; isopentenyl diphosphate biosynthesis via DXP pathway; isopentenyl diphosphate from 1-deoxy-D-xylulose 5-phosphate: step 3/6. Catalyzes the phosphorylation of the position 2 hydroxy group of 4-diphosphocytidyl-2C-methyl-D-erythritol. This Shewanella halifaxensis (strain HAW-EB4) protein is 4-diphosphocytidyl-2-C-methyl-D-erythritol kinase.